We begin with the raw amino-acid sequence, 632 residues long: Threonine--tRNA ligase (632 aa).

The TGS domain occupies 1-61 (MPIITLPDGT…KTDANLAIIT (61 aa)). The interval 242–533 (DHRKIGKIQD…LIEHYEGAYP (292 aa)) is catalytic. Zn(2+) is bound by residues Cys333, His384, and His510.

Belongs to the class-II aminoacyl-tRNA synthetase family. In terms of assembly, homodimer. It depends on Zn(2+) as a cofactor.

It localises to the cytoplasm. It carries out the reaction tRNA(Thr) + L-threonine + ATP = L-threonyl-tRNA(Thr) + AMP + diphosphate + H(+). Catalyzes the attachment of threonine to tRNA(Thr) in a two-step reaction: L-threonine is first activated by ATP to form Thr-AMP and then transferred to the acceptor end of tRNA(Thr). Also edits incorrectly charged L-seryl-tRNA(Thr). This Ruthia magnifica subsp. Calyptogena magnifica protein is Threonine--tRNA ligase.